Reading from the N-terminus, the 94-residue chain is DNA-directed RNA polymerase subunit omega (94 aa).

It belongs to the RNA polymerase subunit omega family. In terms of assembly, the RNAP catalytic core consists of 2 alpha, 1 beta, 1 beta' and 1 omega subunit. When a sigma factor is associated with the core the holoenzyme is formed, which can initiate transcription.

The enzyme catalyses RNA(n) + a ribonucleoside 5'-triphosphate = RNA(n+1) + diphosphate. Its function is as follows. Promotes RNA polymerase assembly. Latches the N- and C-terminal regions of the beta' subunit thereby facilitating its interaction with the beta and alpha subunits. The chain is DNA-directed RNA polymerase subunit omega from Tolumonas auensis (strain DSM 9187 / NBRC 110442 / TA 4).